Reading from the N-terminus, the 522-residue chain is Putative glucosylceramidase 3 (522 aa).

Residues 1–21 form the signal peptide; the sequence is MSRWKVVILCLLSFMFEIGHA. Residue Glu259 is the Proton donor of the active site. Residue Glu364 is the Nucleophile of the active site.

Belongs to the glycosyl hydrolase 30 family.

The enzyme catalyses a beta-D-glucosylceramide + H2O = an N-acyl-sphingoid base + D-glucose. It catalyses the reaction a beta-D-glucosyl-(1&lt;-&gt;1')-N-acylsphing-4-enine + H2O = an N-acylsphing-4-enine + D-glucose. It carries out the reaction an N-acyl-1-beta-D-glucosyl-15-methylhexadecasphing-4-enine + H2O = an N-acyl-15-methylhexadecasphing-4-enine + D-glucose. Its pathway is lipid metabolism; sphingolipid metabolism. Its function is as follows. Glucosylceramidase that catalyzes the hydrolysis of glucosylceramides into free ceramides and glucose. C.elegans contain specific sphingoid bases, which are unique or different in structure compared to the sphingoid bases found in other animals. Two examples of these distinctive compounds are: 15-methylhexadecasphinganine and 15-methylhexadecasphing-4-enine. This Caenorhabditis elegans protein is Putative glucosylceramidase 3.